The chain runs to 363 residues: Tetraacyldisaccharide 4'-kinase (363 aa).

62-69 contributes to the ATP binding site; it reads RVGGTGKT.

It belongs to the LpxK family.

The enzyme catalyses a lipid A disaccharide + ATP = a lipid IVA + ADP + H(+). It participates in glycolipid biosynthesis; lipid IV(A) biosynthesis; lipid IV(A) from (3R)-3-hydroxytetradecanoyl-[acyl-carrier-protein] and UDP-N-acetyl-alpha-D-glucosamine: step 6/6. Functionally, transfers the gamma-phosphate of ATP to the 4'-position of a tetraacyldisaccharide 1-phosphate intermediate (termed DS-1-P) to form tetraacyldisaccharide 1,4'-bis-phosphate (lipid IVA). This chain is Tetraacyldisaccharide 4'-kinase, found in Polynucleobacter asymbioticus (strain DSM 18221 / CIP 109841 / QLW-P1DMWA-1) (Polynucleobacter necessarius subsp. asymbioticus).